Consider the following 227-residue polypeptide: Ribose-5-phosphate isomerase A (227 aa).

Residues 26-29 (TGST), 82-85 (DGAD), and 95-98 (KGGG) contribute to the substrate site. The active-site Proton acceptor is the Glu104. Lys122 contacts substrate.

Belongs to the ribose 5-phosphate isomerase family. In terms of assembly, homodimer.

The catalysed reaction is aldehydo-D-ribose 5-phosphate = D-ribulose 5-phosphate. It functions in the pathway carbohydrate degradation; pentose phosphate pathway; D-ribose 5-phosphate from D-ribulose 5-phosphate (non-oxidative stage): step 1/1. Its function is as follows. Catalyzes the reversible conversion of ribose-5-phosphate to ribulose 5-phosphate. The sequence is that of Ribose-5-phosphate isomerase A from Streptococcus pyogenes serotype M28 (strain MGAS6180).